The following is a 447-amino-acid chain: Tubulin beta-1 chain (447 aa).

Glutamine 11, glutamate 69, serine 138, glycine 142, threonine 143, glycine 144, asparagine 204, and asparagine 226 together coordinate GTP. Mg(2+) is bound at residue glutamate 69. The segment covering 411-427 (AESNMNDLVSEYQQYQD) has biased composition (polar residues). The disordered stretch occupies residues 411–447 (AESNMNDLVSEYQQYQDATADEEGDYEDEEEQVPEDE). The span at 429-447 (TADEEGDYEDEEEQVPEDE) shows a compositional bias: acidic residues.

This sequence belongs to the tubulin family. In terms of assembly, dimer of alpha and beta chains. A typical microtubule is a hollow water-filled tube with an outer diameter of 25 nm and an inner diameter of 15 nM. Alpha-beta heterodimers associate head-to-tail to form protofilaments running lengthwise along the microtubule wall with the beta-tubulin subunit facing the microtubule plus end conferring a structural polarity. Microtubules usually have 13 protofilaments but different protofilament numbers can be found in some organisms and specialized cells. Mg(2+) serves as cofactor. As to expression, expressed in leaf sheaths.

The protein resides in the cytoplasm. It is found in the cytoskeleton. Its function is as follows. Tubulin is the major constituent of microtubules, a cylinder consisting of laterally associated linear protofilaments composed of alpha- and beta-tubulin heterodimers. Microtubules grow by the addition of GTP-tubulin dimers to the microtubule end, where a stabilizing cap forms. Below the cap, tubulin dimers are in GDP-bound state, owing to GTPase activity of alpha-tubulin. The polypeptide is Tubulin beta-1 chain (TUBB1) (Oryza sativa subsp. japonica (Rice)).